The primary structure comprises 494 residues: UPF0371 protein SP_0341 (494 aa).

The protein belongs to the UPF0371 family.

This Streptococcus pneumoniae serotype 4 (strain ATCC BAA-334 / TIGR4) protein is UPF0371 protein SP_0341.